Consider the following 343-residue polypeptide: Ribosomal RNA small subunit methyltransferase C (343 aa).

It belongs to the methyltransferase superfamily. RsmC family. Monomer.

It is found in the cytoplasm. It carries out the reaction guanosine(1207) in 16S rRNA + S-adenosyl-L-methionine = N(2)-methylguanosine(1207) in 16S rRNA + S-adenosyl-L-homocysteine + H(+). Specifically methylates the guanine in position 1207 of 16S rRNA in the 30S particle. The polypeptide is Ribosomal RNA small subunit methyltransferase C (Escherichia coli O6:H1 (strain CFT073 / ATCC 700928 / UPEC)).